A 357-amino-acid chain; its full sequence is Probable dual-specificity RNA methyltransferase RlmN (357 aa).

Residue Glu95 is the Proton acceptor of the active site. The 239-residue stretch at 105-343 folds into the Radical SAM core domain; that stretch reads KKSSYTLCLS…VSIREERGSD (239 aa). Residues Cys112 and Cys348 are joined by a disulfide bond. Cys119, Cys123, and Cys126 together coordinate [4Fe-4S] cluster. S-adenosyl-L-methionine is bound by residues 174-175, Ser206, 229-231, and Asn305; these read GE and SLH. The active-site S-methylcysteine intermediate is the Cys348.

It belongs to the radical SAM superfamily. RlmN family. [4Fe-4S] cluster is required as a cofactor.

Its subcellular location is the cytoplasm. The catalysed reaction is adenosine(2503) in 23S rRNA + 2 reduced [2Fe-2S]-[ferredoxin] + 2 S-adenosyl-L-methionine = 2-methyladenosine(2503) in 23S rRNA + 5'-deoxyadenosine + L-methionine + 2 oxidized [2Fe-2S]-[ferredoxin] + S-adenosyl-L-homocysteine. It carries out the reaction adenosine(37) in tRNA + 2 reduced [2Fe-2S]-[ferredoxin] + 2 S-adenosyl-L-methionine = 2-methyladenosine(37) in tRNA + 5'-deoxyadenosine + L-methionine + 2 oxidized [2Fe-2S]-[ferredoxin] + S-adenosyl-L-homocysteine. Specifically methylates position 2 of adenine 2503 in 23S rRNA and position 2 of adenine 37 in tRNAs. The protein is Probable dual-specificity RNA methyltransferase RlmN of Syntrophomonas wolfei subsp. wolfei (strain DSM 2245B / Goettingen).